The sequence spans 88 residues: Exodeoxyribonuclease 7 small subunit (88 aa).

Residues 68 to 88 (SDPMHPDDGEPFDPSLVSTSQ) are disordered.

It belongs to the XseB family. In terms of assembly, heterooligomer composed of large and small subunits.

The protein localises to the cytoplasm. The catalysed reaction is Exonucleolytic cleavage in either 5'- to 3'- or 3'- to 5'-direction to yield nucleoside 5'-phosphates.. In terms of biological role, bidirectionally degrades single-stranded DNA into large acid-insoluble oligonucleotides, which are then degraded further into small acid-soluble oligonucleotides. In Xylella fastidiosa (strain 9a5c), this protein is Exodeoxyribonuclease 7 small subunit.